A 435-amino-acid polypeptide reads, in one-letter code: 5-methylthioadenosine/S-adenosylhomocysteine deaminase (435 aa).

Zn(2+) is bound by residues histidine 65 and histidine 67. Residues glutamate 94, arginine 150, and histidine 189 each coordinate substrate. Histidine 216 lines the Zn(2+) pocket. The substrate site is built by glutamate 219 and aspartate 304. Zn(2+) is bound at residue aspartate 304.

It belongs to the metallo-dependent hydrolases superfamily. MTA/SAH deaminase family. Zn(2+) is required as a cofactor.

The enzyme catalyses S-adenosyl-L-homocysteine + H2O + H(+) = S-inosyl-L-homocysteine + NH4(+). It catalyses the reaction S-methyl-5'-thioadenosine + H2O + H(+) = S-methyl-5'-thioinosine + NH4(+). Functionally, catalyzes the deamination of 5-methylthioadenosine and S-adenosyl-L-homocysteine into 5-methylthioinosine and S-inosyl-L-homocysteine, respectively. Is also able to deaminate adenosine. This is 5-methylthioadenosine/S-adenosylhomocysteine deaminase from Bacillus cereus (strain AH187).